The following is a 553-amino-acid chain: Hydroxylamine reductase (553 aa).

Positions 3, 6, 18, and 25 each coordinate [2Fe-2S] cluster. Hybrid [4Fe-2O-2S] cluster contacts are provided by histidine 252, glutamate 276, cysteine 320, cysteine 408, cysteine 436, cysteine 461, glutamate 495, and lysine 497. The residue at position 408 (cysteine 408) is a Cysteine persulfide.

Belongs to the HCP family. [2Fe-2S] cluster serves as cofactor. Requires hybrid [4Fe-2O-2S] cluster as cofactor.

It localises to the cytoplasm. The catalysed reaction is A + NH4(+) + H2O = hydroxylamine + AH2 + H(+). Functionally, catalyzes the reduction of hydroxylamine to form NH(3) and H(2)O. This Aliivibrio fischeri (strain ATCC 700601 / ES114) (Vibrio fischeri) protein is Hydroxylamine reductase.